The sequence spans 460 residues: Inactive 7-epi-sesquithujene synthase (460 aa).

The Mg(2+) site is built by D308 and D312. Positions 308 and 312 each coordinate substrate. Residues 308-312 carry the DDXXD motif motif; that stretch reads DDMFD.

Belongs to the terpene synthase family. Monomer. Mg(2+) is required as a cofactor. Mn(2+) serves as cofactor.

It is found in the cytoplasm. It participates in secondary metabolite biosynthesis; terpenoid biosynthesis. In terms of biological role, non-functional sesquiterpene synthase due to a frameshift removing part of the catalytic site. The sequence is that of Inactive 7-epi-sesquithujene synthase from Zea mays (Maize).